Reading from the N-terminus, the 161-residue chain is Endoribonuclease YbeY (161 aa).

Zn(2+) contacts are provided by His121, His125, and His131.

This sequence belongs to the endoribonuclease YbeY family. The cofactor is Zn(2+).

It localises to the cytoplasm. Single strand-specific metallo-endoribonuclease involved in late-stage 70S ribosome quality control and in maturation of the 3' terminus of the 16S rRNA. The chain is Endoribonuclease YbeY from Stenotrophomonas maltophilia (strain K279a).